We begin with the raw amino-acid sequence, 430 residues long: Serine--tRNA ligase (430 aa).

The disordered stretch occupies residues 103-127; it reads LPNIPDDDVPDGRDENDNQEVSRWG. 237–239 is a binding site for L-serine; it reads TAE. Residue 268 to 270 coordinates ATP; the sequence is RSE. Position 291 (Glu291) interacts with L-serine. Position 355–358 (355–358) interacts with ATP; that stretch reads EISS. Ser391 contributes to the L-serine binding site.

The protein belongs to the class-II aminoacyl-tRNA synthetase family. Type-1 seryl-tRNA synthetase subfamily. Homodimer. The tRNA molecule binds across the dimer.

The protein localises to the cytoplasm. The catalysed reaction is tRNA(Ser) + L-serine + ATP = L-seryl-tRNA(Ser) + AMP + diphosphate + H(+). It catalyses the reaction tRNA(Sec) + L-serine + ATP = L-seryl-tRNA(Sec) + AMP + diphosphate + H(+). Its pathway is aminoacyl-tRNA biosynthesis; selenocysteinyl-tRNA(Sec) biosynthesis; L-seryl-tRNA(Sec) from L-serine and tRNA(Sec): step 1/1. Functionally, catalyzes the attachment of serine to tRNA(Ser). Is also able to aminoacylate tRNA(Sec) with serine, to form the misacylated tRNA L-seryl-tRNA(Sec), which will be further converted into selenocysteinyl-tRNA(Sec). In Sodalis glossinidius (strain morsitans), this protein is Serine--tRNA ligase.